The following is a 416-amino-acid chain: Doublesex- and mab-3-related transcription factor A2 (416 aa).

The DM DNA-binding region spans Cys25–Arg72. Residues Phe131–Ser154 are compositionally biased toward polar residues. Positions Phe131 to His226 are disordered. Residues Gly197 to Gly207 show a composition bias toward low complexity. Positions Met227 to Gln262 constitute a DMA domain.

This sequence belongs to the DMRT family.

Its subcellular location is the nucleus. Functionally, may be involved in sexual development. This Takifugu rubripes (Japanese pufferfish) protein is Doublesex- and mab-3-related transcription factor A2 (dmrta2).